The chain runs to 133 residues: Small ribosomal subunit protein uS8 (133 aa).

This sequence belongs to the universal ribosomal protein uS8 family. Part of the 30S ribosomal subunit. Contacts proteins S5 and S12.

One of the primary rRNA binding proteins, it binds directly to 16S rRNA central domain where it helps coordinate assembly of the platform of the 30S subunit. This chain is Small ribosomal subunit protein uS8, found in Chlorobaculum parvum (strain DSM 263 / NCIMB 8327) (Chlorobium vibrioforme subsp. thiosulfatophilum).